The following is a 259-amino-acid chain: Phosphatidylserine decarboxylase proenzyme (259 aa).

Catalysis depends on charge relay system; for autoendoproteolytic cleavage activity residues Asp86, His142, and Ser226. Ser226 functions as the Schiff-base intermediate with substrate; via pyruvic acid; for decarboxylase activity in the catalytic mechanism. A Pyruvic acid (Ser); by autocatalysis modification is found at Ser226.

The protein belongs to the phosphatidylserine decarboxylase family. PSD-B subfamily. Prokaryotic type I sub-subfamily. Heterodimer of a large membrane-associated beta subunit and a small pyruvoyl-containing alpha subunit. The cofactor is pyruvate. Post-translationally, is synthesized initially as an inactive proenzyme. Formation of the active enzyme involves a self-maturation process in which the active site pyruvoyl group is generated from an internal serine residue via an autocatalytic post-translational modification. Two non-identical subunits are generated from the proenzyme in this reaction, and the pyruvate is formed at the N-terminus of the alpha chain, which is derived from the carboxyl end of the proenzyme. The autoendoproteolytic cleavage occurs by a canonical serine protease mechanism, in which the side chain hydroxyl group of the serine supplies its oxygen atom to form the C-terminus of the beta chain, while the remainder of the serine residue undergoes an oxidative deamination to produce ammonia and the pyruvoyl prosthetic group on the alpha chain. During this reaction, the Ser that is part of the protease active site of the proenzyme becomes the pyruvoyl prosthetic group, which constitutes an essential element of the active site of the mature decarboxylase.

It is found in the cell membrane. It carries out the reaction a 1,2-diacyl-sn-glycero-3-phospho-L-serine + H(+) = a 1,2-diacyl-sn-glycero-3-phosphoethanolamine + CO2. It functions in the pathway phospholipid metabolism; phosphatidylethanolamine biosynthesis; phosphatidylethanolamine from CDP-diacylglycerol: step 2/2. Its function is as follows. Catalyzes the formation of phosphatidylethanolamine (PtdEtn) from phosphatidylserine (PtdSer). This is Phosphatidylserine decarboxylase proenzyme from Geobacillus sp. (strain WCH70).